Here is a 447-residue protein sequence, read N- to C-terminus: Argininosuccinate synthase (447 aa).

ATP-binding positions include 17 to 25 (AFSGGLDTS) and Ala43. Tyr99 is an L-citrulline binding site. Residues Gly129 and Thr131 each contribute to the ATP site. L-aspartate is bound by residues Thr131, Asn135, and Asp136. Asn135 lines the L-citrulline pocket. Asp136 serves as a coordination point for ATP. L-citrulline contacts are provided by Arg139 and Ser192. An ATP-binding site is contributed by Asp194. 3 residues coordinate L-citrulline: Thr201, Glu203, and Glu280.

Belongs to the argininosuccinate synthase family. Type 2 subfamily. Homotetramer.

The protein resides in the cytoplasm. It catalyses the reaction L-citrulline + L-aspartate + ATP = 2-(N(omega)-L-arginino)succinate + AMP + diphosphate + H(+). It participates in amino-acid biosynthesis; L-arginine biosynthesis; L-arginine from L-ornithine and carbamoyl phosphate: step 2/3. The protein is Argininosuccinate synthase of Salmonella dublin (strain CT_02021853).